The sequence spans 716 residues: Mitogen-activated protein kinase kinase kinase 5 (716 aa).

A compositionally biased stretch (low complexity) spans 1–27 (MRWLPQISFSSPSSSPSSSLKPVASYS). 4 disordered regions span residues 1–42 (MRWL…DRFH), 74–98 (ASTS…VPRS), 119–180 (AANA…YWVN), and 238–302 (YDIT…VTNG). Positions 31–40 (DPDRNQDRDR) are enriched in basic and acidic residues. The span at 75–91 (STSSSTFDSGLTRSPSA) shows a compositional bias: polar residues. A compositionally biased stretch (basic and acidic residues) spans 124–137 (GLDDRDRDPERLIS). Composition is skewed to polar residues over residues 138–150 (DRTS…TSVN), 162–173 (ENSSYQDFSPRN), and 242–251 (AFSTDNSPIH). Positions 263–273 (RSPQPSRPSSP) are enriched in low complexity. The Protein kinase domain occupies 346-607 (WKKGKLIGRG…ASMLLEHRFL (262 aa)). Residues 352–360 (IGRGTFGSV) and Lys375 each bind ATP. Residue Asp472 is the Proton acceptor of the active site. The span at 610–633 (SLQPTSPSNSDVSQLFNGMNITEP) shows a compositional bias: polar residues. Residues 610–716 (SLQPTSPSNS…RRTGVTSDHL (107 aa)) are disordered. Phosphoserine; by PBL27 occurs at positions 617 and 622. Residues 634 to 648 (SSRREKPNFKLDQVP) are compositionally biased toward basic and acidic residues. 2 stretches are compositionally biased toward polar residues: residues 652-661 (NMTSSESESG) and 674-685 (LTGTVNRLSPRS). A phosphoserine; by PBL27 mark is found at Ser658 and Ser660. Thr677 is modified (phosphothreonine; by PBL27). Ser685 carries the post-translational modification Phosphoserine; by PBL27. Over residues 703-716 (SSDRRRTGVTSDHL) the composition is skewed to basic and acidic residues.

The protein belongs to the protein kinase superfamily. STE Ser/Thr protein kinase family. MAP kinase kinase kinase subfamily. In terms of assembly, interacts with PBL27 at the plasma membrane; disassociation is induced by chitin perception by the CERK1 complex. Interacts with MKK2, MKK4, and MKK5 mainly in the cytosol. In terms of processing, phosphorylated by PBL27 during chitin-mediated signaling in a CERK1-dependent manner. Mostly expressed in flower buds. Also present in pollen, roots, leaves and seedlings, and, at low levels, in stems and immature siliques.

It localises to the cell membrane. Its subcellular location is the cytoplasm. The protein localises to the cytosol. It carries out the reaction L-seryl-[protein] + ATP = O-phospho-L-seryl-[protein] + ADP + H(+). The enzyme catalyses L-threonyl-[protein] + ATP = O-phospho-L-threonyl-[protein] + ADP + H(+). Its function is as follows. Mitogen-activated protein kinase (MAPK) involved in the transduction of signal between the host cell surface chitin receptor complex CERK1-LYK5 and the intracellular MAPK cascade that leads to chitin-induced immunity. Phosphorylates and activates MAPK targets (e.g. MKK4, MKK5, and possibly MKK2) when phosphorylated by PBL27 after elicitation by chitin. Required for resistance to the fungus A.brassicicola. This chain is Mitogen-activated protein kinase kinase kinase 5, found in Arabidopsis thaliana (Mouse-ear cress).